The chain runs to 210 residues: Ribosomal RNA small subunit methyltransferase G (210 aa).

S-adenosyl-L-methionine is bound by residues G77, F82, 100–102 (ERS), 128–129 (VE), and R141.

The protein belongs to the methyltransferase superfamily. RNA methyltransferase RsmG family.

It localises to the cytoplasm. Functionally, specifically methylates the N7 position of a guanine in 16S rRNA. This chain is Ribosomal RNA small subunit methyltransferase G, found in Borrelia duttonii (strain Ly).